The primary structure comprises 45 residues: Cytochrome b559 subunit beta (45 aa).

A helical membrane pass occupies residues 20–36 (WLAVHTLGVPTVFFLGA). Histidine 24 contacts heme.

This sequence belongs to the PsbE/PsbF family. Heterodimer of an alpha subunit and a beta subunit. PSII is composed of 1 copy each of membrane proteins PsbA, PsbB, PsbC, PsbD, PsbE, PsbF, PsbH, PsbI, PsbJ, PsbK, PsbL, PsbM, PsbT, PsbX, PsbY, PsbZ, Psb30/Ycf12, peripheral proteins PsbO, CyanoQ (PsbQ), PsbU, PsbV and a large number of cofactors. It forms dimeric complexes. Heme b serves as cofactor.

It localises to the cellular thylakoid membrane. In terms of biological role, this b-type cytochrome is tightly associated with the reaction center of photosystem II (PSII). PSII is a light-driven water:plastoquinone oxidoreductase that uses light energy to abstract electrons from H(2)O, generating O(2) and a proton gradient subsequently used for ATP formation. It consists of a core antenna complex that captures photons, and an electron transfer chain that converts photonic excitation into a charge separation. This is Cytochrome b559 subunit beta from Nostoc punctiforme (strain ATCC 29133 / PCC 73102).